Reading from the N-terminus, the 422-residue chain is UDP-N-acetylglucosamine 1-carboxyvinyltransferase (422 aa).

22-23 lines the phosphoenolpyruvate pocket; it reads KN. Arg93 serves as a coordination point for UDP-N-acetyl-alpha-D-glucosamine. Residue Cys117 is the Proton donor of the active site. 2-(S-cysteinyl)pyruvic acid O-phosphothioketal is present on Cys117. UDP-N-acetyl-alpha-D-glucosamine is bound by residues 122–126, Asp309, and Ile331; that span reads RPVDQ.

Belongs to the EPSP synthase family. MurA subfamily.

Its subcellular location is the cytoplasm. The enzyme catalyses phosphoenolpyruvate + UDP-N-acetyl-alpha-D-glucosamine = UDP-N-acetyl-3-O-(1-carboxyvinyl)-alpha-D-glucosamine + phosphate. The protein operates within cell wall biogenesis; peptidoglycan biosynthesis. Its function is as follows. Cell wall formation. Adds enolpyruvyl to UDP-N-acetylglucosamine. The chain is UDP-N-acetylglucosamine 1-carboxyvinyltransferase from Delftia acidovorans (strain DSM 14801 / SPH-1).